A 174-amino-acid chain; its full sequence is 3-hydroxyanthranilate 3,4-dioxygenase (174 aa).

O2 is bound at residue arginine 47. Residues histidine 51, glutamate 57, and histidine 95 each coordinate Fe cation. Glutamate 57 provides a ligand contact to substrate. Substrate-binding residues include arginine 99 and glutamate 110. 4 residues coordinate Fe cation: cysteine 125, cysteine 128, cysteine 162, and cysteine 165.

This sequence belongs to the 3-HAO family. In terms of assembly, homodimer. The cofactor is Fe(2+).

The enzyme catalyses 3-hydroxyanthranilate + O2 = (2Z,4Z)-2-amino-3-carboxymuconate 6-semialdehyde. It functions in the pathway cofactor biosynthesis; NAD(+) biosynthesis; quinolinate from L-kynurenine: step 3/3. Inhibited by 4-chloro-3-hydroxyanthranilate. Mechanism of inactivation involves the oxidation of the catalytic active site Fe(2+) to the catalytically inactive Fe(3+) oxidation state, superoxide production, and formation of two disulfide bonds between Cys-125 and Cys-128, and Cys-162 and Cys-165. Enzyme can be reactivated under reducing conditions. In terms of biological role, catalyzes the oxidative ring opening of 3-hydroxyanthranilate to 2-amino-3-carboxymuconate semialdehyde, which spontaneously cyclizes to quinolinate. The polypeptide is 3-hydroxyanthranilate 3,4-dioxygenase (Cupriavidus metallidurans (strain ATCC 43123 / DSM 2839 / NBRC 102507 / CH34) (Ralstonia metallidurans)).